The sequence spans 391 residues: S-adenosylmethionine synthase (391 aa).

An ATP-binding site is contributed by histidine 14. Residue aspartate 16 coordinates Mg(2+). Glutamate 42 lines the K(+) pocket. Residues glutamate 55 and glutamine 98 each contribute to the L-methionine site. The flexible loop stretch occupies residues 98-108 (QSVDIAMGVDE). ATP contacts are provided by residues 172 to 174 (DGK), 238 to 239 (RF), aspartate 247, 253 to 254 (RK), alanine 270, and lysine 274. Aspartate 247 serves as a coordination point for L-methionine. Lysine 278 contacts L-methionine.

The protein belongs to the AdoMet synthase family. Homotetramer; dimer of dimers. The cofactor is Mg(2+). K(+) is required as a cofactor.

The protein localises to the cytoplasm. It carries out the reaction L-methionine + ATP + H2O = S-adenosyl-L-methionine + phosphate + diphosphate. It functions in the pathway amino-acid biosynthesis; S-adenosyl-L-methionine biosynthesis; S-adenosyl-L-methionine from L-methionine: step 1/1. Functionally, catalyzes the formation of S-adenosylmethionine (AdoMet) from methionine and ATP. The overall synthetic reaction is composed of two sequential steps, AdoMet formation and the subsequent tripolyphosphate hydrolysis which occurs prior to release of AdoMet from the enzyme. The chain is S-adenosylmethionine synthase from Clostridium botulinum (strain Hall / ATCC 3502 / NCTC 13319 / Type A).